A 494-amino-acid polypeptide reads, in one-letter code: UPF0371 protein SPG_0310 (494 aa).

It belongs to the UPF0371 family.

The protein is UPF0371 protein SPG_0310 of Streptococcus pneumoniae serotype 19F (strain G54).